The following is a 157-amino-acid chain: SsrA-binding protein (157 aa).

The interval 130 to 157 (HDKRQDMAKKDSQRRIQKELGQRQKGME) is disordered. Positions 132–157 (KRQDMAKKDSQRRIQKELGQRQKGME) are enriched in basic and acidic residues.

The protein belongs to the SmpB family.

It localises to the cytoplasm. Its function is as follows. Required for rescue of stalled ribosomes mediated by trans-translation. Binds to transfer-messenger RNA (tmRNA), required for stable association of tmRNA with ribosomes. tmRNA and SmpB together mimic tRNA shape, replacing the anticodon stem-loop with SmpB. tmRNA is encoded by the ssrA gene; the 2 termini fold to resemble tRNA(Ala) and it encodes a 'tag peptide', a short internal open reading frame. During trans-translation Ala-aminoacylated tmRNA acts like a tRNA, entering the A-site of stalled ribosomes, displacing the stalled mRNA. The ribosome then switches to translate the ORF on the tmRNA; the nascent peptide is terminated with the 'tag peptide' encoded by the tmRNA and targeted for degradation. The ribosome is freed to recommence translation, which seems to be the essential function of trans-translation. This is SsrA-binding protein from Alkaliphilus metalliredigens (strain QYMF).